The following is an 87-amino-acid chain: MSERNQRKVYQGRVVSDKMDKTITVVVETYKKDPIYGKRVKYSKKFKAHDENNQAKIGDIVKIMETRPLSATKRFRLVEVVEEAVII.

This sequence belongs to the universal ribosomal protein uS17 family. In terms of assembly, part of the 30S ribosomal subunit.

Its function is as follows. One of the primary rRNA binding proteins, it binds specifically to the 5'-end of 16S ribosomal RNA. This Bacillus velezensis (strain DSM 23117 / BGSC 10A6 / LMG 26770 / FZB42) (Bacillus amyloliquefaciens subsp. plantarum) protein is Small ribosomal subunit protein uS17.